A 271-amino-acid polypeptide reads, in one-letter code: Mannosyl-3-phosphoglycerate phosphatase (271 aa).

Aspartate 13 serves as the catalytic Nucleophile. 3 residues coordinate Mg(2+): aspartate 13, aspartate 15, and aspartate 214.

It belongs to the HAD-like hydrolase superfamily. MPGP family. Mg(2+) serves as cofactor.

It localises to the cytoplasm. The enzyme catalyses 2-O-(alpha-D-mannosyl)-3-phosphoglycerate + H2O = (2R)-2-O-(alpha-D-mannosyl)-glycerate + phosphate. The chain is Mannosyl-3-phosphoglycerate phosphatase from Escherichia coli O81 (strain ED1a).